A 423-amino-acid chain; its full sequence is Imidazolonepropionase (423 aa).

Fe(3+) contacts are provided by His-78 and His-80. Residues His-78 and His-80 each coordinate Zn(2+). Residues Arg-87, Tyr-150, and His-183 each contribute to the 4-imidazolone-5-propanoate site. Tyr-150 contacts N-formimidoyl-L-glutamate. His-247 is a Fe(3+) binding site. A Zn(2+)-binding site is contributed by His-247. 4-imidazolone-5-propanoate is bound at residue Glu-250. A Fe(3+)-binding site is contributed by Asp-322. Asp-322 is a binding site for Zn(2+). Residues Asn-324 and Gly-326 each coordinate N-formimidoyl-L-glutamate. Residue Ser-327 coordinates 4-imidazolone-5-propanoate.

This sequence belongs to the metallo-dependent hydrolases superfamily. HutI family. Zn(2+) is required as a cofactor. It depends on Fe(3+) as a cofactor.

The protein resides in the cytoplasm. The enzyme catalyses 4-imidazolone-5-propanoate + H2O = N-formimidoyl-L-glutamate. It functions in the pathway amino-acid degradation; L-histidine degradation into L-glutamate; N-formimidoyl-L-glutamate from L-histidine: step 3/3. In terms of biological role, catalyzes the hydrolytic cleavage of the carbon-nitrogen bond in imidazolone-5-propanoate to yield N-formimidoyl-L-glutamate. It is the third step in the universal histidine degradation pathway. The chain is Imidazolonepropionase from Bacillus thuringiensis (strain Al Hakam).